The primary structure comprises 387 residues: ATP phosphoribosyltransferase regulatory subunit (387 aa).

It belongs to the class-II aminoacyl-tRNA synthetase family. HisZ subfamily. As to quaternary structure, heteromultimer composed of HisG and HisZ subunits.

It localises to the cytoplasm. Its pathway is amino-acid biosynthesis; L-histidine biosynthesis; L-histidine from 5-phospho-alpha-D-ribose 1-diphosphate: step 1/9. Required for the first step of histidine biosynthesis. May allow the feedback regulation of ATP phosphoribosyltransferase activity by histidine. The protein is ATP phosphoribosyltransferase regulatory subunit of Psychrobacter arcticus (strain DSM 17307 / VKM B-2377 / 273-4).